A 241-amino-acid polypeptide reads, in one-letter code: 1-(5-phosphoribosyl)-5-[(5-phosphoribosylamino)methylideneamino] imidazole-4-carboxamide isomerase (241 aa).

Residue Asp-8 is the Proton acceptor of the active site. Asp-130 (proton donor) is an active-site residue.

Belongs to the HisA/HisF family.

It localises to the cytoplasm. It carries out the reaction 1-(5-phospho-beta-D-ribosyl)-5-[(5-phospho-beta-D-ribosylamino)methylideneamino]imidazole-4-carboxamide = 5-[(5-phospho-1-deoxy-D-ribulos-1-ylimino)methylamino]-1-(5-phospho-beta-D-ribosyl)imidazole-4-carboxamide. The protein operates within amino-acid biosynthesis; L-histidine biosynthesis; L-histidine from 5-phospho-alpha-D-ribose 1-diphosphate: step 4/9. The sequence is that of 1-(5-phosphoribosyl)-5-[(5-phosphoribosylamino)methylideneamino] imidazole-4-carboxamide isomerase from Leptospira borgpetersenii serovar Hardjo-bovis (strain L550).